The primary structure comprises 446 residues: Probable glycine dehydrogenase (decarboxylating) subunit 1 (446 aa).

This sequence belongs to the GcvP family. N-terminal subunit subfamily. As to quaternary structure, the glycine cleavage system is composed of four proteins: P, T, L and H. In this organism, the P 'protein' is a heterodimer of two subunits.

It catalyses the reaction N(6)-[(R)-lipoyl]-L-lysyl-[glycine-cleavage complex H protein] + glycine + H(+) = N(6)-[(R)-S(8)-aminomethyldihydrolipoyl]-L-lysyl-[glycine-cleavage complex H protein] + CO2. Its function is as follows. The glycine cleavage system catalyzes the degradation of glycine. The P protein binds the alpha-amino group of glycine through its pyridoxal phosphate cofactor; CO(2) is released and the remaining methylamine moiety is then transferred to the lipoamide cofactor of the H protein. The sequence is that of Probable glycine dehydrogenase (decarboxylating) subunit 1 from Coxiella burnetii (strain CbuK_Q154) (Coxiella burnetii (strain Q154)).